The sequence spans 596 residues: Phosphoenolpyruvate carboxykinase [GTP] (596 aa).

Substrate-binding positions include Arg77 and 205–207; that span reads YGG. Mn(2+) is bound by residues Lys214 and His234. Ser256 contacts substrate. 257–262 provides a ligand contact to GTP; the sequence is ACGKTN. Cys258 is an active-site residue. Asp283 is a Mn(2+) binding site. The tract at residues 362–388 is disordered; it reads KKGSTEKAAHPNSRFTAPAKNNPAISP. Position 373–375 (373–375) interacts with substrate; it reads NSR. GTP-binding positions include Arg375, Arg406, and 499–502; that span reads YGDN.

Belongs to the phosphoenolpyruvate carboxykinase [GTP] family. As to quaternary structure, monomer. The cofactor is Mn(2+).

It localises to the cytoplasm. It catalyses the reaction oxaloacetate + GTP = phosphoenolpyruvate + GDP + CO2. The protein operates within carbohydrate biosynthesis; gluconeogenesis. In terms of biological role, catalyzes the conversion of oxaloacetate (OAA) to phosphoenolpyruvate (PEP), the rate-limiting step in the metabolic pathway that produces glucose from lactate and other precursors derived from the citric acid cycle. This chain is Phosphoenolpyruvate carboxykinase [GTP], found in Anaeromyxobacter dehalogenans (strain 2CP-1 / ATCC BAA-258).